The primary structure comprises 230 residues: Cytochrome c oxidase subunit 2 (230 aa).

Residues 1–29 (NNFFQGYNLLFQHSLFASYMDWFHAFNCS) are Mitochondrial intermembrane-facing. The chain crosses the membrane as a helical span at residues 30–50 (LLLGVLVFVTLLFGYLIFSTF). The Mitochondrial matrix portion of the chain corresponds to 51–63 (YFKSKKIEYQFGE). Residues 64-84 (LLCSIFPTIILLMQMVPSLSL) traverse the membrane as a helical segment. Over 85 to 230 (LYYYGLMNLD…FKSWCFGTME (146 aa)) the chain is Mitochondrial intermembrane. Cu cation-binding residues include histidine 163, cysteine 198, glutamate 200, cysteine 202, histidine 206, and methionine 209. Glutamate 200 contributes to the Mg(2+) binding site.

It belongs to the cytochrome c oxidase subunit 2 family. Component of the cytochrome c oxidase (complex IV, CIV), a multisubunit enzyme composed of a catalytic core of 3 subunits and several supernumerary subunits. The complex exists as a monomer or a dimer and forms supercomplexes (SCs) in the inner mitochondrial membrane with ubiquinol-cytochrome c oxidoreductase (cytochrome b-c1 complex, complex III, CIII). Cu cation serves as cofactor.

The protein localises to the mitochondrion inner membrane. The catalysed reaction is 4 Fe(II)-[cytochrome c] + O2 + 8 H(+)(in) = 4 Fe(III)-[cytochrome c] + 2 H2O + 4 H(+)(out). Its function is as follows. Component of the cytochrome c oxidase, the last enzyme in the mitochondrial electron transport chain which drives oxidative phosphorylation. The respiratory chain contains 3 multisubunit complexes succinate dehydrogenase (complex II, CII), ubiquinol-cytochrome c oxidoreductase (cytochrome b-c1 complex, complex III, CIII) and cytochrome c oxidase (complex IV, CIV), that cooperate to transfer electrons derived from NADH and succinate to molecular oxygen, creating an electrochemical gradient over the inner membrane that drives transmembrane transport and the ATP synthase. Cytochrome c oxidase is the component of the respiratory chain that catalyzes the reduction of oxygen to water. Electrons originating from reduced cytochrome c in the intermembrane space (IMS) are transferred via the dinuclear copper A center (CU(A)) of subunit 2 and heme A of subunit 1 to the active site in subunit 1, a binuclear center (BNC) formed by heme A3 and copper B (CU(B)). The BNC reduces molecular oxygen to 2 water molecules using 4 electrons from cytochrome c in the IMS and 4 protons from the mitochondrial matrix. This is Cytochrome c oxidase subunit 2 (cox-2) from Caenorhabditis remanei (Caenorhabditis vulgaris).